The sequence spans 92 residues: Small ribosomal subunit protein bS20 (92 aa).

Residues 1 to 28 are disordered; it reads MANTASAEKRNRQAQKRRARNVQVRTGV.

Belongs to the bacterial ribosomal protein bS20 family.

Functionally, binds directly to 16S ribosomal RNA. The chain is Small ribosomal subunit protein bS20 from Anaeromyxobacter dehalogenans (strain 2CP-C).